Consider the following 368-residue polypeptide: Phosphate acyltransferase (368 aa).

The segment at 337 to 368 (LEQAARDASGAGQASPIAGQPAEPYAAQSSKA) is disordered.

This sequence belongs to the PlsX family. As to quaternary structure, homodimer. Probably interacts with PlsY.

Its subcellular location is the cytoplasm. It catalyses the reaction a fatty acyl-[ACP] + phosphate = an acyl phosphate + holo-[ACP]. The protein operates within lipid metabolism; phospholipid metabolism. Catalyzes the reversible formation of acyl-phosphate (acyl-PO(4)) from acyl-[acyl-carrier-protein] (acyl-ACP). This enzyme utilizes acyl-ACP as fatty acyl donor, but not acyl-CoA. This Paraburkholderia phytofirmans (strain DSM 17436 / LMG 22146 / PsJN) (Burkholderia phytofirmans) protein is Phosphate acyltransferase.